Reading from the N-terminus, the 41-residue chain is MDIDYRIAIVLAPVVIAASWAVFNIGAAALRQIQGFLDREA.

The chain crosses the membrane as a helical span at residues 7–25 (IAIVLAPVVIAASWAVFNI).

The protein belongs to the PsbY family. In terms of assembly, PSII is composed of 1 copy each of membrane proteins PsbA, PsbB, PsbC, PsbD, PsbE, PsbF, PsbH, PsbI, PsbJ, PsbK, PsbL, PsbM, PsbT, PsbX, PsbY, PsbZ, Psb30/Ycf12, peripheral proteins PsbO, CyanoQ (PsbQ), PsbU, PsbV and a large number of cofactors. It forms dimeric complexes.

The protein resides in the cellular thylakoid membrane. Functionally, loosely associated component of the core of photosystem II (PSII), it is not always seen in crystals. PSII is a light-driven water plastoquinone oxidoreductase, using light energy to abstract electrons from H(2)O, generating a proton gradient subsequently used for ATP formation. This chain is Photosystem II reaction center protein Y, found in Nostoc punctiforme (strain ATCC 29133 / PCC 73102).